The sequence spans 738 residues: Ribosomal RNA large subunit methyltransferase K/L (738 aa).

Residues Thr-46 to Leu-157 enclose the THUMP domain.

The protein belongs to the methyltransferase superfamily. RlmKL family.

Its subcellular location is the cytoplasm. The enzyme catalyses guanosine(2445) in 23S rRNA + S-adenosyl-L-methionine = N(2)-methylguanosine(2445) in 23S rRNA + S-adenosyl-L-homocysteine + H(+). It catalyses the reaction guanosine(2069) in 23S rRNA + S-adenosyl-L-methionine = N(2)-methylguanosine(2069) in 23S rRNA + S-adenosyl-L-homocysteine + H(+). Functionally, specifically methylates the guanine in position 2445 (m2G2445) and the guanine in position 2069 (m7G2069) of 23S rRNA. The chain is Ribosomal RNA large subunit methyltransferase K/L from Methylococcus capsulatus (strain ATCC 33009 / NCIMB 11132 / Bath).